The chain runs to 727 residues: C-terminal-binding protein 1 (727 aa).

A THAP-type zinc finger spans residues 5-60 (CGFPNCKFRSRYRGLEDNRHFYRIPKRPLILRQRWLTAIGRTEETVVSQLRICSAH). The disordered stretch occupies residues 64–158 (GEKKEGDIPV…HPPVLPDPQQ (95 aa)). The segment covering 77–94 (TVDKQIKIELPPKESKNS) has biased composition (basic and acidic residues). Residues tyrosine 251, 331 to 336 (LGCGRV), aspartate 355, 388 to 394 (CNLGDET), 415 to 417 (TSH), aspartate 441, and 467 to 470 (HSAW) contribute to the NAD(+) site. The segment covering 587–613 (ANAQRGSPANRSSRSSPSPHTNKSSVS) has biased composition (low complexity). Disordered regions lie at residues 587–629 (ANAQ…SPAA) and 652–681 (APNG…GDEN).

Belongs to the D-isomer specific 2-hydroxyacid dehydrogenase family. Homodimer.

Its function is as follows. Binds DNA and represses gene expression. Plays a role in regulation of life span, possibly by regulating transcription of genes important for lipid metabolism. This Caenorhabditis elegans protein is C-terminal-binding protein 1.